Reading from the N-terminus, the 630-residue chain is E3 ubiquitin-protein ligase RNF169 (630 aa).

Residues 1–24 (MKMAAVGSAKSTGPGQRSKSRPGA) form a disordered region. Residues 36 to 75 (CPVCSEILLEPVTMPCGHSVCLHCFQRTVKLISLCCPLCR) form an RING-type zinc finger. A UMI motif motif is present at residues 155–163 (DERKKKMHI). Residues 220–247 (QRSRSCTDSEDGRGKSRGHTNQAVPEKA) form a disordered region. Residues 224–233 (SCTDSEDGRG) are compositionally biased toward basic and acidic residues. The MIU motif motif lies at 565-582 (QEKEDRELALKLQRQFDR). The LR motif motif lies at 599–611 (LRSWGSKDGIVGY).

It belongs to the RNF169 family.

It localises to the nucleus. Its subcellular location is the nucleoplasm. The enzyme catalyses S-ubiquitinyl-[E2 ubiquitin-conjugating enzyme]-L-cysteine + [acceptor protein]-L-lysine = [E2 ubiquitin-conjugating enzyme]-L-cysteine + N(6)-ubiquitinyl-[acceptor protein]-L-lysine.. It functions in the pathway protein modification; protein ubiquitination. In terms of biological role, probable E3 ubiquitin-protein ligase that acts as a negative regulator of double-strand breaks (DSBs) repair following DNA damage. This is E3 ubiquitin-protein ligase RNF169 (rnf169) from Danio rerio (Zebrafish).